The following is a 553-amino-acid chain: Transcriptional regulator HilA (553 aa).

The segment at residues 11 to 107 (NKKFVFDDFI…LYGQGYRFNR (97 aa)) is a DNA-binding region (ompR/PhoB-type). Asp-62 bears the 4-aspartylphosphate mark. One copy of the TPR repeat lies at 372–405 (ADIKYYYGWNLFMAGQLEEALQTINECLKLDPTR).

In terms of biological role, the main transcriptional regulator of the Salmonella pathogenicity island 1 (SPI1) gene expression. Activates the expression of invasion genes by a direct action at their promoters and also indirectly by increasing the level of InvF. Also binds upstream of prgH and directly activates the expression of prgHIJK operon. The polypeptide is Transcriptional regulator HilA (hilA) (Salmonella typhimurium (strain LT2 / SGSC1412 / ATCC 700720)).